The sequence spans 169 residues: Peptide deformylase (169 aa).

Fe cation-binding residues include cysteine 91 and histidine 133. Glutamate 134 is an active-site residue. Histidine 137 provides a ligand contact to Fe cation.

Belongs to the polypeptide deformylase family. Fe(2+) is required as a cofactor.

It catalyses the reaction N-terminal N-formyl-L-methionyl-[peptide] + H2O = N-terminal L-methionyl-[peptide] + formate. Functionally, removes the formyl group from the N-terminal Met of newly synthesized proteins. Requires at least a dipeptide for an efficient rate of reaction. N-terminal L-methionine is a prerequisite for activity but the enzyme has broad specificity at other positions. The sequence is that of Peptide deformylase from Erwinia tasmaniensis (strain DSM 17950 / CFBP 7177 / CIP 109463 / NCPPB 4357 / Et1/99).